Here is a 224-residue protein sequence, read N- to C-terminus: Large ribosomal subunit protein bL25 (224 aa).

A disordered region spans residues 196–224 (VEEVDTDAEEVDAADVPATEQGSEEDKGE). Residues 197-208 (EEVDTDAEEVDA) are compositionally biased toward acidic residues.

This sequence belongs to the bacterial ribosomal protein bL25 family. CTC subfamily. Part of the 50S ribosomal subunit; part of the 5S rRNA/L5/L18/L25 subcomplex. Contacts the 5S rRNA. Binds to the 5S rRNA independently of L5 and L18.

In terms of biological role, this is one of the proteins that binds to the 5S RNA in the ribosome where it forms part of the central protuberance. In Psychrobacter sp. (strain PRwf-1), this protein is Large ribosomal subunit protein bL25.